The chain runs to 309 residues: Methyltransferase AacuQ (309 aa).

Positions 57–149 (DVGAGNGPYA…QLRPGGTFAC (93 aa)) are methyltransferase domain.

It belongs to the methyltransferase superfamily.

It functions in the pathway secondary metabolite biosynthesis. Methyltransferase; part of the gene cluster that mediates the biosynthesis of the tetrahydroxanthone dimer secalonic acid D. The pathway begins with the synthesis of atrochrysone thioester by the polyketide synthase AacuL. The atrochrysone carboxyl ACP thioesterase AacuM then breaks the thioester bond and releases the atrochrysone carboxylic acid from AacuL. Atrochrysone carboxylic acid is decarboxylated by the decarboxylase AacuI, and oxidized by the anthrone oxygenase AacuG to yield emodin. Emodin is then reduced to emodin hydroquinone by a yet unidentified oxidoreductase. A-ring reduction by the short chain dehydrogenase AacuN, dehydration by the scytalone dehydratase-like protein AacuK and probable spontaneous re-oxidation, results in overall deoxygenation to chrysophanol. Baeyer-Villiger oxidation by the Baeyer-Villiger monooxygenase (BVMO) AacuH then yields monodictyphenone. Monodictyphenone is transformed into compounds with the tetrahydroxanthone skeleton via methylesterification by the methyltransferase AacuQ, followed by the action of the flavin-dependent monooxygenase AacuC, the isomerase AacuP, and the short chain dehydrogenase/reductase AacuF or AacuD. AacuF and AacuD should accept the same compound as a substrate but perform the ketoreduction with a different stereoselectivity, thus yielding blennolides B and A, respectively. In the final step of the biosynthesis, the cytochrome P450 monooxygenase AacuE accepts blennolide B and/or blennolide A to conduct the dimerization reaction to furnish the tetrahydroxanthone dimers, secalonic acids D, B, and F. In Aspergillus aculeatus (strain ATCC 16872 / CBS 172.66 / WB 5094), this protein is Methyltransferase AacuQ.